Reading from the N-terminus, the 121-residue chain is Small ribosomal subunit protein uS13 (121 aa).

A disordered region spans residues 96–121 (PVRGQNTKNNARTRKGKAVAIAGKKK). Over residues 106–121 (ARTRKGKAVAIAGKKK) the composition is skewed to basic residues.

The protein belongs to the universal ribosomal protein uS13 family. In terms of assembly, part of the 30S ribosomal subunit. Forms a loose heterodimer with protein S19. Forms two bridges to the 50S subunit in the 70S ribosome.

Functionally, located at the top of the head of the 30S subunit, it contacts several helices of the 16S rRNA. In the 70S ribosome it contacts the 23S rRNA (bridge B1a) and protein L5 of the 50S subunit (bridge B1b), connecting the 2 subunits; these bridges are implicated in subunit movement. Contacts the tRNAs in the A and P-sites. This Streptococcus pneumoniae serotype 4 (strain ATCC BAA-334 / TIGR4) protein is Small ribosomal subunit protein uS13.